Here is a 288-residue protein sequence, read N- to C-terminus: ATP synthase gamma chain (288 aa).

This sequence belongs to the ATPase gamma chain family. As to quaternary structure, F-type ATPases have 2 components, CF(1) - the catalytic core - and CF(0) - the membrane proton channel. CF(1) has five subunits: alpha(3), beta(3), gamma(1), delta(1), epsilon(1). CF(0) has three main subunits: a, b and c.

The protein resides in the cell inner membrane. Functionally, produces ATP from ADP in the presence of a proton gradient across the membrane. The gamma chain is believed to be important in regulating ATPase activity and the flow of protons through the CF(0) complex. In Vibrio vulnificus (strain CMCP6), this protein is ATP synthase gamma chain.